Consider the following 597-residue polypeptide: Elongation factor 4 (597 aa).

Residues 2–184 form the tr-type G domain; the sequence is KNIRNFSIIA…TVVQKIPAPK (183 aa). GTP contacts are provided by residues 14–19 and 131–134; these read DHGKST and NKID.

It belongs to the TRAFAC class translation factor GTPase superfamily. Classic translation factor GTPase family. LepA subfamily.

The protein resides in the cell inner membrane. The enzyme catalyses GTP + H2O = GDP + phosphate + H(+). Functionally, required for accurate and efficient protein synthesis under certain stress conditions. May act as a fidelity factor of the translation reaction, by catalyzing a one-codon backward translocation of tRNAs on improperly translocated ribosomes. Back-translocation proceeds from a post-translocation (POST) complex to a pre-translocation (PRE) complex, thus giving elongation factor G a second chance to translocate the tRNAs correctly. Binds to ribosomes in a GTP-dependent manner. This is Elongation factor 4 from Laribacter hongkongensis (strain HLHK9).